Consider the following 702-residue polypeptide: Soluble guanylate cyclase gcy-31 (702 aa).

A heme-binding site is contributed by H104. Positions 368–406 (TQQSAELKLLLHQEAQKSRNMRENMNRLKKERRRTDKLL) form a coiled coil. The Guanylate cyclase domain maps to 435–564 (TILFTDIVEF…ETVYVANKME (130 aa)). Mg(2+) is bound by residues D440 and D484. A disordered region spans residues 614-702 (RHGPHRVPSP…QDLTPRKSIT (89 aa)). A compositionally biased stretch (acidic residues) spans 633–643 (SQTEDDDDDEL). Over residues 683-695 (RNSNKTPRQSQDL) the composition is skewed to polar residues.

It belongs to the adenylyl cyclase class-4/guanylyl cyclase family. Heterodimer; with other soluble guanylate cyclases. Heme serves as cofactor. Expressed in a pair of bilaterally symmetric neurons in the head.

Its subcellular location is the cytoplasm. The catalysed reaction is GTP = 3',5'-cyclic GMP + diphosphate. May be regulated by molecular oxygen. Probably not activated by nitric oxide (NO). Functionally, synthesizes cyclic GMP (cGMP) from GTP. May play a role in embryogenesis. This chain is Soluble guanylate cyclase gcy-31 (gcy-31), found in Caenorhabditis elegans.